Reading from the N-terminus, the 232-residue chain is A-type ATP synthase subunit D (232 aa).

It belongs to the V-ATPase D subunit family. As to quaternary structure, has multiple subunits with at least A(3), B(3), C, D, E, F, H, I and proteolipid K(x).

Its subcellular location is the cell membrane. Its function is as follows. Component of the A-type ATP synthase that produces ATP from ADP in the presence of a proton gradient across the membrane. This chain is A-type ATP synthase subunit D, found in Methanopyrus kandleri (strain AV19 / DSM 6324 / JCM 9639 / NBRC 100938).